A 166-amino-acid polypeptide reads, in one-letter code: Putative 4-hydroxy-4-methyl-2-oxoglutarate aldolase 2 (166 aa).

Ala-2 carries the post-translational modification N-acetylalanine. Substrate contacts are provided by residues 81 to 84 and Arg-103; that span reads GGNP. Asp-104 serves as a coordination point for a divalent metal cation.

Belongs to the class II aldolase/RraA-like family. As to quaternary structure, homotrimer. A divalent metal cation serves as cofactor.

The catalysed reaction is 4-hydroxy-4-methyl-2-oxoglutarate = 2 pyruvate. The enzyme catalyses oxaloacetate + H(+) = pyruvate + CO2. Its function is as follows. Catalyzes the aldol cleavage of 4-hydroxy-4-methyl-2-oxoglutarate (HMG) into 2 molecules of pyruvate. Also contains a secondary oxaloacetate (OAA) decarboxylase activity due to the common pyruvate enolate transition state formed following C-C bond cleavage in the retro-aldol and decarboxylation reactions. This chain is Putative 4-hydroxy-4-methyl-2-oxoglutarate aldolase 2, found in Arabidopsis thaliana (Mouse-ear cress).